The sequence spans 101 residues: Hg-scorpine-like-2 (101 aa).

A signal peptide spans 1-17 (MKLTILILLVITSFCSC). Residues 60–100 (QQLCMFNKDVAGWCEKSCQQSAHQKGYCHGTKCKCGIPLNY) enclose the BetaSPN-type CS-alpha/beta domain. Disulfide bonds link cysteine 63-cysteine 87, cysteine 73-cysteine 92, and cysteine 77-cysteine 94.

The protein belongs to the long chain scorpion toxin family. Class 3 subfamily. As to expression, expressed by the venom gland.

Its subcellular location is the secreted. Functionally, inhibits voltage-gated potassium channels. This Hoffmannihadrurus gertschi (Scorpion) protein is Hg-scorpine-like-2.